We begin with the raw amino-acid sequence, 423 residues long: Serine hydroxymethyltransferase (423 aa).

Residues L120 and 124–126 (GHL) each bind (6S)-5,6,7,8-tetrahydrofolate. K229 is modified (N6-(pyridoxal phosphate)lysine). (6S)-5,6,7,8-tetrahydrofolate contacts are provided by residues E245 and 353–355 (SPF).

This sequence belongs to the SHMT family. In terms of assembly, homodimer. Pyridoxal 5'-phosphate serves as cofactor.

Its subcellular location is the cytoplasm. It catalyses the reaction (6R)-5,10-methylene-5,6,7,8-tetrahydrofolate + glycine + H2O = (6S)-5,6,7,8-tetrahydrofolate + L-serine. Its pathway is one-carbon metabolism; tetrahydrofolate interconversion. The protein operates within amino-acid biosynthesis; glycine biosynthesis; glycine from L-serine: step 1/1. Functionally, catalyzes the reversible interconversion of serine and glycine with tetrahydrofolate (THF) serving as the one-carbon carrier. This reaction serves as the major source of one-carbon groups required for the biosynthesis of purines, thymidylate, methionine, and other important biomolecules. Also exhibits THF-independent aldolase activity toward beta-hydroxyamino acids, producing glycine and aldehydes, via a retro-aldol mechanism. In Prochlorococcus marinus (strain MIT 9312), this protein is Serine hydroxymethyltransferase.